Consider the following 372-residue polypeptide: Glutamate 5-kinase (372 aa).

Lys-14 contacts ATP. Ser-54, Asp-141, and Asn-153 together coordinate substrate. Residue Thr-173–Asp-174 participates in ATP binding. Residues Ala-280–Val-358 enclose the PUA domain.

It belongs to the glutamate 5-kinase family.

The protein localises to the cytoplasm. The catalysed reaction is L-glutamate + ATP = L-glutamyl 5-phosphate + ADP. It functions in the pathway amino-acid biosynthesis; L-proline biosynthesis; L-glutamate 5-semialdehyde from L-glutamate: step 1/2. Its function is as follows. Catalyzes the transfer of a phosphate group to glutamate to form L-glutamate 5-phosphate. This is Glutamate 5-kinase from Herminiimonas arsenicoxydans.